The following is a 169-amino-acid chain: T-cell receptor gamma chain C region DFL12 (169 aa).

The segment at 1–136 (PSDKRLDADI…LQFMSTSAYY (136 aa)) is c region. A helical membrane pass occupies residues 137–157 (TYLLLLLKSVIYLAIISFSLL). The Cytoplasmic portion of the chain corresponds to 158-169 (RRTSVCCNEKRS).

It localises to the membrane. This chain is T-cell receptor gamma chain C region DFL12, found in Mus musculus (Mouse).